The primary structure comprises 261 residues: uncharacterized protein (261 aa).

The HTH tetR-type domain maps to S15–Y75. The H-T-H motif DNA-binding region spans S38–F57. The tract at residues A234–R261 is disordered. Residues R241–R261 show a composition bias toward low complexity.

This is an uncharacterized protein from Mycobacterium bovis (strain ATCC BAA-935 / AF2122/97).